The chain runs to 701 residues: Elongation factor G (701 aa).

The 283-residue stretch at 8 to 290 (SLYRNIGISA…AVVELLPAPT (283 aa)) folds into the tr-type G domain. GTP-binding positions include 17–24 (AHIDAGKT), 88–92 (DTPGH), and 142–145 (NKMD).

It belongs to the TRAFAC class translation factor GTPase superfamily. Classic translation factor GTPase family. EF-G/EF-2 subfamily.

The protein resides in the cytoplasm. Catalyzes the GTP-dependent ribosomal translocation step during translation elongation. During this step, the ribosome changes from the pre-translocational (PRE) to the post-translocational (POST) state as the newly formed A-site-bound peptidyl-tRNA and P-site-bound deacylated tRNA move to the P and E sites, respectively. Catalyzes the coordinated movement of the two tRNA molecules, the mRNA and conformational changes in the ribosome. This chain is Elongation factor G, found in Neisseria gonorrhoeae (strain ATCC 700825 / FA 1090).